The primary structure comprises 327 residues: D-alanine--D-alanine ligase (327 aa).

The ATP-grasp domain occupies 113–312 (KRLWMTHGLA…YEDFVLQVLA (200 aa)). 139-194 (VADLGLPLIVKPAREGSSIGLTKVTAADQMRAAFDKAAALDNDVIAETFVDGAELT) serves as a coordination point for ATP. Mg(2+)-binding residues include Asp-266, Glu-279, and Asn-281.

Belongs to the D-alanine--D-alanine ligase family. It depends on Mg(2+) as a cofactor. Mn(2+) serves as cofactor.

Its subcellular location is the cytoplasm. The catalysed reaction is 2 D-alanine + ATP = D-alanyl-D-alanine + ADP + phosphate + H(+). The protein operates within cell wall biogenesis; peptidoglycan biosynthesis. Cell wall formation. This Cupriavidus taiwanensis (strain DSM 17343 / BCRC 17206 / CCUG 44338 / CIP 107171 / LMG 19424 / R1) (Ralstonia taiwanensis (strain LMG 19424)) protein is D-alanine--D-alanine ligase.